The primary structure comprises 394 residues: Metallophosphoesterase 1 (394 aa).

The helical transmembrane segment at 27-47 (TVVVISVLLFCEYFIYYLVLF) threads the bilayer. Residues D74, D116, N154, H247, H301, and H303 each contribute to the a divalent metal cation site. Residues 354–374 (TVLTTYCAAAAFLLVLILAHF) traverse the membrane as a helical segment.

Belongs to the metallophosphoesterase superfamily. MPPE1 family. In terms of assembly, interacts with GPI-anchor proteins (via the GPI portion). Interacts with TMED10. It depends on Mn(2+) as a cofactor.

The protein resides in the endoplasmic reticulum-Golgi intermediate compartment membrane. Its function is as follows. Metallophosphoesterase that catalyzes the removal of a side-chain ethanolamine-phosphate (EtNP) from the second mannose of the GPI-anchor protein intermediate. Participates in the glycan remodeling steps of GPI-anchor maturation to allow an efficient transport of GPI-anchor proteins from the endoplasmic reticulum to the Golgi. This is Metallophosphoesterase 1 from Rattus norvegicus (Rat).